Here is a 581-residue protein sequence, read N- to C-terminus: Tetratricopeptide repeat and J domain-containing co-chaperone DNJ1 (581 aa).

The signal sequence occupies residues 1 to 19 (MKATLLPSLLALSLTLCLA). TPR repeat units lie at residues 48–81 (ASQHLTQANVALQSGRYQDALSAFDLALQADPSS), 82–115 (WLTYYRRATAQLSLGRTSAALQDFQSLLKLNPKF), 116–149 (DKAYLQQAKVYLKEGDCDKAKQALKTYDSIRAEK), 221–254 (LETRLVRARCQTMKGRIEDAMADWTRAVHLTPSP), 257–293 (LRRLSVLSYFVVSEPGSQSRDAGLQHLKACLHSDPDN), 378–411 (LELHTMYCKAYTELNDMDKAMPYCELVLAKDPDN), and 412–445 (VEATLARAELALQREDYDQAVRDLTKAFDASGRT). An N-linked (GlcNAc...) asparagine glycan is attached at asparagine 293. One can recognise a J domain in the interval 467 to 528 (DYYKVLGVKR…ELRKKYDQGD (62 aa)). Residues 522-544 (KKYDQGDDPNDPMGGQQGGYGNP) form a disordered region.

As to quaternary structure, interacts with the ER chaperone BIP1.

The protein localises to the endoplasmic reticulum lumen. Its function is as follows. Endoplasmic reticulum (ER) protein that functions as a co-chaperone for BIP1 during ER stress. Might be specifically involved in the refolding of N-glycosylated proteins. In Mycosarcoma maydis (Corn smut fungus), this protein is Tetratricopeptide repeat and J domain-containing co-chaperone DNJ1.